A 329-amino-acid polypeptide reads, in one-letter code: Beta-ketoacyl-[acyl-carrier-protein] synthase III (329 aa).

Active-site residues include C123 and H256. Residues Q257–R261 form an ACP-binding region. N286 is a catalytic residue.

It belongs to the thiolase-like superfamily. FabH family. As to quaternary structure, homodimer.

The protein localises to the cytoplasm. The catalysed reaction is malonyl-[ACP] + acetyl-CoA + H(+) = 3-oxobutanoyl-[ACP] + CO2 + CoA. It participates in lipid metabolism; fatty acid biosynthesis. Functionally, catalyzes the condensation reaction of fatty acid synthesis by the addition to an acyl acceptor of two carbons from malonyl-ACP. Catalyzes the first condensation reaction which initiates fatty acid synthesis and may therefore play a role in governing the total rate of fatty acid production. Possesses both acetoacetyl-ACP synthase and acetyl transacylase activities. Its substrate specificity determines the biosynthesis of branched-chain and/or straight-chain of fatty acids. This Burkholderia vietnamiensis (strain G4 / LMG 22486) (Burkholderia cepacia (strain R1808)) protein is Beta-ketoacyl-[acyl-carrier-protein] synthase III.